The primary structure comprises 91 residues: Large ribosomal subunit protein uL22 (91 aa).

Belongs to the universal ribosomal protein uL22 family. Part of the 50S ribosomal subunit.

In terms of biological role, this protein binds specifically to 23S rRNA; its binding is stimulated by other ribosomal proteins, e.g. L4, L17, and L20. It is important during the early stages of 50S assembly. It makes multiple contacts with different domains of the 23S rRNA in the assembled 50S subunit and ribosome. Functionally, the globular domain of the protein is located near the polypeptide exit tunnel on the outside of the subunit, while an extended beta-hairpin is found that lines the wall of the exit tunnel in the center of the 70S ribosome. In Loofah witches'-broom phytoplasma, this protein is Large ribosomal subunit protein uL22 (rplV).